A 440-amino-acid chain; its full sequence is COP9 signalosome complex subunit 4 (440 aa).

Residues Ser-216 to Glu-386 form the PCI domain.

It belongs to the CSN4 family. In terms of assembly, component of the COP9 signalosome (CSN) complex.

It localises to the cytoplasm. Its subcellular location is the nucleus. Functionally, component of the COP9 signalosome (CSN) complex that acts as an regulator of the ubiquitin (Ubl) conjugation pathway by mediating the deneddylation of the cullin subunit of SCF-type E3 ubiquitin-protein ligase complexes. The CSN complex is involved in the regulation of the circadian clock through its control of the stability of the SCF(FWD1) complex. The sequence is that of COP9 signalosome complex subunit 4 (csn-4) from Neurospora crassa (strain ATCC 24698 / 74-OR23-1A / CBS 708.71 / DSM 1257 / FGSC 987).